A 79-amino-acid polypeptide reads, in one-letter code: Small ribosomal subunit protein bS18 (79 aa).

The protein belongs to the bacterial ribosomal protein bS18 family. Part of the 30S ribosomal subunit. Forms a tight heterodimer with protein bS6.

Its function is as follows. Binds as a heterodimer with protein bS6 to the central domain of the 16S rRNA, where it helps stabilize the platform of the 30S subunit. This chain is Small ribosomal subunit protein bS18, found in Listeria innocua serovar 6a (strain ATCC BAA-680 / CLIP 11262).